The sequence spans 179 residues: Molybdopterin synthase catalytic subunit (179 aa).

The segment covering 1 to 10 has biased composition (polar residues); sequence MTTSEDQTTP. The tract at residues 1 to 21 is disordered; the sequence is MTTSEDQTTPAHLDPKTYPRH. Residues 127–128, lysine 143, and 150–152 each bind substrate; these read HR and KRE.

This sequence belongs to the MoaE family. MOCS2B subfamily. As to quaternary structure, heterotetramer; composed of 2 small (MOCS2A) and 2 large (MOCS2B) subunits.

Its subcellular location is the cytoplasm. The catalysed reaction is 2 [molybdopterin-synthase sulfur-carrier protein]-C-terminal-Gly-aminoethanethioate + cyclic pyranopterin phosphate + H2O = molybdopterin + 2 [molybdopterin-synthase sulfur-carrier protein]-C-terminal Gly-Gly + 2 H(+). It participates in cofactor biosynthesis; molybdopterin biosynthesis. In terms of biological role, catalytic subunit of the molybdopterin synthase complex, a complex that catalyzes the conversion of precursor Z into molybdopterin. Acts by mediating the incorporation of 2 sulfur atoms from thiocarboxylated MOCS2A into precursor Z to generate a dithiolene group. The polypeptide is Molybdopterin synthase catalytic subunit (Aspergillus oryzae (strain ATCC 42149 / RIB 40) (Yellow koji mold)).